We begin with the raw amino-acid sequence, 258 residues long: Protein UL24 homolog (258 aa).

Belongs to the herpesviridae UL24 family.

It is found in the virion. It localises to the host cytoplasm. The protein resides in the host nucleus. Its subcellular location is the host nucleolus. The protein localises to the host Golgi apparatus. Functionally, may participate in nuclear egress of viral particles. Plays a role in the dispersal of several host nucleolar proteins including NCL/nucleolin and NPM1. Since deletion of host NCL/nucleolin negatively impact on nuclear egress, UL24 supposedly acts on this process through its effect on host nucleoli. The sequence is that of Protein UL24 homolog from Varicella-zoster virus (strain Dumas) (HHV-3).